A 390-amino-acid chain; its full sequence is Pyruvate dehydrogenase E1 component subunit alpha, somatic form, mitochondrial (390 aa).

Residues 1-29 constitute a mitochondrion transit peptide; sequence MRKMLAAVSRVLAGAAQKPASRVLVASRN. K63 is subject to N6-acetyllysine; alternate. K63 bears the N6-succinyllysine; alternate mark. The pyruvate site is built by H92, Y118, R119, A157, G165, V167, D196, G197, A198, N225, and Y227. Thiamine diphosphate is bound by residues Y118 and R119. Thiamine diphosphate is bound by residues G165, V167, D196, G197, A198, and N225. D196 is a Mg(2+) binding site. Residues N225 and Y227 each coordinate Mg(2+). Position 232 is a phosphoserine; by PDK1 (S232). K244 bears the N6-acetyllysine; alternate mark. K244 is subject to N6-succinyllysine; alternate. K267 bears the N6-acetyllysine mark. Residue K277 is modified to N6-succinyllysine. Residue H292 coordinates thiamine diphosphate. At S293 the chain carries Phosphoserine; by PDK1, PDK2, PDK3 and PDK4. S295 carries the phosphoserine modification. S300 carries the post-translational modification Phosphoserine; by PDK1, PDK2, PDK3 and PDK4. Phosphotyrosine is present on Y301. Residue K313 is modified to N6-acetyllysine; alternate. The residue at position 313 (K313) is an N6-succinyllysine; alternate. K321 and K336 each carry N6-acetyllysine. K385 is modified (N6-succinyllysine).

Heterotetramer of two PDHA1 and two PDHB subunits. The heterotetramer interacts with DLAT, and is part of the multimeric pyruvate dehydrogenase complex that contains multiple copies of pyruvate dehydrogenase (E1), dihydrolipoamide acetyltransferase (DLAT, E2) and lipoamide dehydrogenase (DLD, E3). These subunits are bound to an inner core composed of about 48 DLAT and 12 PDHX molecules. The cofactor is thiamine diphosphate. Requires Mg(2+) as cofactor. Post-translationally, phosphorylation at Ser-232, Ser-293 and Ser-300 by PDK family kinases inactivates the enzyme; for this phosphorylation at a single site is sufficient. Phosphorylation at Ser-293 interferes with access to active site, and thereby inactivates the enzyme. Dephosphorylation at all three sites, i.e. at Ser-232, Ser-293 and Ser-300, is required for reactivation. Acetylation alters the phosphorylation pattern. Deacetylated by SIRT3. In all tissues, but in very low amount in testis.

The protein localises to the mitochondrion matrix. It carries out the reaction N(6)-[(R)-lipoyl]-L-lysyl-[protein] + pyruvate + H(+) = N(6)-[(R)-S(8)-acetyldihydrolipoyl]-L-lysyl-[protein] + CO2. Pyruvate dehydrogenase activity is inhibited by phosphorylation of PDHA1; it is reactivated by dephosphorylation. In terms of biological role, the pyruvate dehydrogenase complex catalyzes the overall conversion of pyruvate to acetyl-CoA and CO(2), and thereby links the glycolytic pathway to the tricarboxylic cycle. In Rattus norvegicus (Rat), this protein is Pyruvate dehydrogenase E1 component subunit alpha, somatic form, mitochondrial (Pdha1).